Reading from the N-terminus, the 455-residue chain is Chitin deacetylase 2 (455 aa).

The first 19 residues, 1-19 (MIPSTAAALLTLTAGAAFA), serve as a signal peptide directing secretion. Asn86, Asn98, Asn122, and Asn142 each carry an N-linked (GlcNAc...) asparagine glycan. Positions 157–347 (MTWGLGFDDG…IKSAFNYIVP (191 aa)) constitute a NodB homology domain. Catalysis depends on Asp164, which acts as the Proton acceptor. Asp164 is an acetate binding site. Asp165 is a Co(2+) binding site. Asn168 carries an N-linked (GlcNAc...) asparagine glycan. Positions 214 and 218 each coordinate Co(2+). Tyr255 is an acetate binding site. 2 N-linked (GlcNAc...) asparagine glycosylation sites follow: Asn270 and Asn308. His321 serves as the catalytic Proton donor. Residues Asn325, Asn353, Asn362, and Asn377 are each glycosylated (N-linked (GlcNAc...) asparagine). A disordered region spans residues 381–423 (STTQKDGSSSTNTASGSGAAGSASATSSSDDSSSSGGSSGSSG). N-linked (GlcNAc...) asparagine glycosylation is present at Asn426. Ser429 carries GPI-anchor amidated serine lipidation. Positions 430 to 455 (GALGMFDSLSGVGLILGGVVAGVMLL) are cleaved as a propeptide — removed in mature form.

This sequence belongs to the polysaccharide deacetylase family. It depends on Co(2+) as a cofactor. Post-translationally, the GPI anchor is required for the attachment to the cell membrane but not for cell surface targeting.

Its subcellular location is the secreted. The protein localises to the cell wall. It is found in the cell membrane. The catalysed reaction is [(1-&gt;4)-N-acetyl-beta-D-glucosaminyl](n) + n H2O = chitosan + n acetate. Its function is as follows. Hydrolyzes the N-acetamido groups of N-acetyl-D-glucosamine residues in chitin to form chitosan and acetate. Chitosan is required to anchor melanin to the cell wall, for maintenance of cell wall integrity, and for proper cytokinesis. Chitosan offers an advantage during infection as it is less readily detected than chitin by host immunosurveillance mechanisms. This chain is Chitin deacetylase 2, found in Cryptococcus neoformans var. grubii serotype A (strain H99 / ATCC 208821 / CBS 10515 / FGSC 9487) (Filobasidiella neoformans var. grubii).